The primary structure comprises 280 residues: Putative pyruvate, phosphate dikinase regulatory protein (280 aa).

147–154 (GASRSSKT) contributes to the ADP binding site.

Belongs to the pyruvate, phosphate/water dikinase regulatory protein family. PDRP subfamily.

The catalysed reaction is N(tele)-phospho-L-histidyl/L-threonyl-[pyruvate, phosphate dikinase] + ADP = N(tele)-phospho-L-histidyl/O-phospho-L-threonyl-[pyruvate, phosphate dikinase] + AMP + H(+). The enzyme catalyses N(tele)-phospho-L-histidyl/O-phospho-L-threonyl-[pyruvate, phosphate dikinase] + phosphate + H(+) = N(tele)-phospho-L-histidyl/L-threonyl-[pyruvate, phosphate dikinase] + diphosphate. In terms of biological role, bifunctional serine/threonine kinase and phosphorylase involved in the regulation of the pyruvate, phosphate dikinase (PPDK) by catalyzing its phosphorylation/dephosphorylation. The polypeptide is Putative pyruvate, phosphate dikinase regulatory protein (Pelobacter propionicus (strain DSM 2379 / NBRC 103807 / OttBd1)).